A 299-amino-acid polypeptide reads, in one-letter code: Taste receptor type 2 member 4 (299 aa).

The Extracellular segment spans residues Met-1–Ala-9. Residues Ile-10–Val-30 traverse the membrane as a helical segment. At Asn-31–Arg-46 the chain is on the cytoplasmic side. Residues Ile-47–Ile-67 traverse the membrane as a helical segment. Residues Phe-68–Ser-81 lie on the Extracellular side of the membrane. The helical transmembrane segment at Ala-82 to Leu-102 threads the bilayer. Over Asn-103–Arg-131 the chain is Cytoplasmic. The chain crosses the membrane as a helical span at residues Leu-132 to Gln-152. At Ala-153–Glu-172 the chain is on the extracellular side. Asn-164 and Asn-165 each carry an N-linked (GlcNAc...) asparagine glycan. The chain crosses the membrane as a helical span at residues Gly-173–Val-193. At Thr-194–Lys-230 the chain is on the cytoplasmic side. The helical transmembrane segment at Leu-231 to Leu-251 threads the bilayer. At Pro-252–Lys-262 the chain is on the extracellular side. Residues Ala-263 to Thr-283 form a helical membrane-spanning segment. Residues His-284–Lys-299 lie on the Cytoplasmic side of the membrane.

Belongs to the G-protein coupled receptor T2R family.

The protein localises to the membrane. It is found in the cell projection. It localises to the cilium membrane. Its function is as follows. Gustducin-coupled receptor implicated in the perception of bitter compounds in the oral cavity and the gastrointestinal tract. Signals through PLCB2 and the calcium-regulated cation channel TRPM5. In airway epithelial cells, binding of denatonium increases the intracellular calcium ion concentration and stimulates ciliary beat frequency. The protein is Taste receptor type 2 member 4 (TAS2R4) of Pongo pygmaeus (Bornean orangutan).